The chain runs to 232 residues: Sugar fermentation stimulation protein homolog (232 aa).

The protein belongs to the SfsA family.

The chain is Sugar fermentation stimulation protein homolog from Shouchella clausii (strain KSM-K16) (Alkalihalobacillus clausii).